The sequence spans 247 residues: tRNA uridine(34) hydroxylase (247 aa).

The 95-residue stretch at 124–218 (TKQNVIVIDT…YLEDTQNKNN (95 aa)) folds into the Rhodanese domain. Cysteine 178 acts as the Cysteine persulfide intermediate in catalysis.

The protein belongs to the TrhO family.

It catalyses the reaction uridine(34) in tRNA + AH2 + O2 = 5-hydroxyuridine(34) in tRNA + A + H2O. Catalyzes oxygen-dependent 5-hydroxyuridine (ho5U) modification at position 34 in tRNAs. The polypeptide is tRNA uridine(34) hydroxylase (Rickettsia akari (strain Hartford)).